A 226-amino-acid polypeptide reads, in one-letter code: ATP-dependent Clp protease proteolytic subunit 2 (226 aa).

S118 functions as the Nucleophile in the catalytic mechanism. H143 is a catalytic residue.

This sequence belongs to the peptidase S14 family. As to quaternary structure, fourteen ClpP subunits assemble into 2 heptameric rings which stack back to back to give a disk-like structure with a central cavity, resembling the structure of eukaryotic proteasomes.

Its subcellular location is the cytoplasm. It catalyses the reaction Hydrolysis of proteins to small peptides in the presence of ATP and magnesium. alpha-casein is the usual test substrate. In the absence of ATP, only oligopeptides shorter than five residues are hydrolyzed (such as succinyl-Leu-Tyr-|-NHMec, and Leu-Tyr-Leu-|-Tyr-Trp, in which cleavage of the -Tyr-|-Leu- and -Tyr-|-Trp bonds also occurs).. Functionally, cleaves peptides in various proteins in a process that requires ATP hydrolysis. Has a chymotrypsin-like activity. Plays a major role in the degradation of misfolded proteins. The chain is ATP-dependent Clp protease proteolytic subunit 2 from Synechocystis sp. (strain ATCC 27184 / PCC 6803 / Kazusa).